Here is a 476-residue protein sequence, read N- to C-terminus: MKVSLPAFEKARVLVVGDVMLDRYWVGPTGRISPEAPVPVVKINQVEDRPGGAANVALNIATLGGQVQLAGLVGQDDTAHALTLGVQTLGVEPQWLTIADKPTITKLRVLSRNQQLIRLDFEEAFDKADSVRLLKQSEALLDSVDVVVLSDYAKGAIDQPRDFIALARAKGVMVLVDPKGSDFGRYQGASLITPNMSEFEAVVGTVTSEADLLEKARGLLKQHHFDAILVTRSEKGMTLVTTNAPELHIPTVAREVYDVTGAGDTVISALATSLAAGADLPQACAIANTAAGVVVGKLGTSTVSRIELIEALALHHGESGFGVVSEDQLAYALEQAKLRGERVVMTNGCFDILHAGHVSYLKQAKALGDRLIVAVNDDASVKRLKGDGRPVNQVDRRMAVLAGLASVDWVVPFSEDTPQRIITRLLPNLLVKGGDYKLEDIAGGAEVIAAGGQVQVLGFEDGISTTAIIQNIMANQ.

Residues 1–319 are ribokinase; that stretch reads MKVSLPAFEK…EALALHHGES (319 aa). 195 to 198 provides a ligand contact to ATP; sequence NMSE. Aspartate 264 is an active-site residue. Residues 345-476 are cytidylyltransferase; that stretch reads MTNGCFDILH…AIIQNIMANQ (132 aa).

In the N-terminal section; belongs to the carbohydrate kinase PfkB family. It in the C-terminal section; belongs to the cytidylyltransferase family. As to quaternary structure, homodimer.

The enzyme catalyses D-glycero-beta-D-manno-heptose 7-phosphate + ATP = D-glycero-beta-D-manno-heptose 1,7-bisphosphate + ADP + H(+). The catalysed reaction is D-glycero-beta-D-manno-heptose 1-phosphate + ATP + H(+) = ADP-D-glycero-beta-D-manno-heptose + diphosphate. It functions in the pathway nucleotide-sugar biosynthesis; ADP-L-glycero-beta-D-manno-heptose biosynthesis; ADP-L-glycero-beta-D-manno-heptose from D-glycero-beta-D-manno-heptose 7-phosphate: step 1/4. It participates in nucleotide-sugar biosynthesis; ADP-L-glycero-beta-D-manno-heptose biosynthesis; ADP-L-glycero-beta-D-manno-heptose from D-glycero-beta-D-manno-heptose 7-phosphate: step 3/4. Functionally, catalyzes the phosphorylation of D-glycero-D-manno-heptose 7-phosphate at the C-1 position to selectively form D-glycero-beta-D-manno-heptose-1,7-bisphosphate. In terms of biological role, catalyzes the ADP transfer from ATP to D-glycero-beta-D-manno-heptose 1-phosphate, yielding ADP-D-glycero-beta-D-manno-heptose. In Shewanella baltica (strain OS155 / ATCC BAA-1091), this protein is Bifunctional protein HldE.